The following is a 637-amino-acid chain: Early transcription factor 70 kDa subunit (637 aa).

Belongs to the helicase family. VETF subfamily. In terms of assembly, heterodimer of a 70 kDa and a 82 kDa subunit. Part of the early transcription complex composed of ETF, RAP94/OPG109, and the DNA-directed RNA polymerase. Apparently non-glycosylated.

Its subcellular location is the virion. Its function is as follows. Acts with RNA polymerase to initiate transcription from early gene promoters. Is recruited by the RPO-associated protein of 94 kDa RAP94/OPG109 to form the early transcription complex, which also contains the core RNA polymerase. ETF heterodimer binds to early gene promoters. This chain is Early transcription factor 70 kDa subunit (OPG118), found in Monkeypox virus.